The chain runs to 321 residues: 6-phosphogluconolactonase-like protein 1 (321 aa).

The interval 36–85 (GKVSRSTQMSGTSLNGNGNTESKTMERVNSVRSNASSRGGSEDGATKKLK) is disordered. Residues 39–57 (SRSTQMSGTSLNGNGNTES) are compositionally biased toward polar residues. Low complexity predominate over residues 63-74 (VNSVRSNASSRG). A phosphoserine mark is found at S65 and S68. Residues 75–85 (GSEDGATKKLK) show a composition bias toward basic and acidic residues. A Phosphothreonine modification is found at T320.

This sequence belongs to the glucosamine/galactosamine-6-phosphate isomerase family. 6-phosphogluconolactonase subfamily.

It localises to the cytoplasm. Its subcellular location is the nucleus. In terms of biological role, may be involved in regulation of tRNA subcellular distribution. This chain is 6-phosphogluconolactonase-like protein 1 (SOL1), found in Saccharomyces cerevisiae (strain ATCC 204508 / S288c) (Baker's yeast).